Here is a 503-residue protein sequence, read N- to C-terminus: WAS/WASL-interacting protein family member 1 (503 aa).

Over residues 1–14 (MPVPPPPAPPPPPT) the composition is skewed to pro residues. A disordered region spans residues 1–503 (MPVPPPPAPP…GAPPLPPIPR (503 aa)). Positions 21-31 (EKPTLNKTEQA) are enriched in polar residues. The WH2 domain occupies 32–49 (GRNALLSDISKGKKLKKT). Position 33 is an asymmetric dimethylarginine (Arg-33). The binds actin stretch occupies residues 45-48 (KLKK). Residues 65 to 104 (AGAGGGGGGFGGGGGFGGGGGGGGGGSFGGGGPPGLGGLF) are compositionally biased toward gly residues. The span at 121-137 (SGGSRPPLLPPGGRSTS) shows a compositional bias: low complexity. 2 positions are modified to omega-N-methylarginine: Arg-125 and Arg-134. Pro residues-rich tracts occupy residues 141–154 (FSPP…PVPS), 161–174 (PPEP…PPRP), 182–191 (SIPPPVPSTP), and 204–223 (PPVP…PPFP). A Phosphoserine modification is found at Ser-142. Ser-234 carries the post-translational modification Phosphoserine. The segment covering 238–247 (SPLSSSSPFS) has biased composition (low complexity). Composition is skewed to pro residues over residues 282 to 298 (VPPP…PSTP) and 306 to 323 (APPP…PLPP). Ser-340 is subject to Phosphoserine. Residue Thr-345 is modified to Phosphothreonine. Residues 346–371 (PPLPSPGRSGPLPPPPSERPPPPVRD) show a composition bias toward pro residues. Ser-350 is subject to Phosphoserine. XRSGPXPPXP motif repeat units lie at residues 352 to 361 (GRSGPLPPPP), 374 to 383 (GRSGPLPPPP), and 410 to 419 (PRSGPRPPLP). Positions 413–434 (GPRPPLPPDRPSAGAPPPPPPS) are enriched in pro residues. Over residues 480–494 (ARNESRSGSNRRERG) the composition is skewed to basic and acidic residues.

It belongs to the verprolin family. As to quaternary structure, binds to WAS, profilin and actin. Binds to WASL. Interacts with DBNL. Interacts with FNBP1L (via the SH3 domain). Highly expressed in peripheral blood mononuclear cells, spleen, placenta, small intestine, colon and thymus. Lower expression in ovary, heart, brain, lung, liver, skeletal muscle, kidney, pancreas, prostate and testis.

It is found in the cytoplasmic vesicle. The protein localises to the cytoplasm. Its subcellular location is the cytoskeleton. It localises to the cell projection. The protein resides in the ruffle. Its function is as follows. Plays a role in the reorganization of the actin cytoskeleton. Contributes with NCK1 and GRB2 in the recruitment and activation of WASL. May participate in regulating the subcellular localization of WASL, resulting in the disassembly of stress fibers in favor of filopodia formation. Plays a role in the formation of cell ruffles. Plays an important role in the intracellular motility of vaccinia virus by functioning as an adapter for recruiting WASL to vaccinia virus. The chain is WAS/WASL-interacting protein family member 1 (WIPF1) from Homo sapiens (Human).